The following is a 325-amino-acid chain: tRNA(Ile)-lysidine synthase (325 aa).

Residue 34–39 (SGGQDS) participates in ATP binding.

The protein belongs to the tRNA(Ile)-lysidine synthase family.

The protein resides in the cytoplasm. It carries out the reaction cytidine(34) in tRNA(Ile2) + L-lysine + ATP = lysidine(34) in tRNA(Ile2) + AMP + diphosphate + H(+). Its function is as follows. Ligates lysine onto the cytidine present at position 34 of the AUA codon-specific tRNA(Ile) that contains the anticodon CAU, in an ATP-dependent manner. Cytidine is converted to lysidine, thus changing the amino acid specificity of the tRNA from methionine to isoleucine. In Synechococcus sp. (strain ATCC 27144 / PCC 6301 / SAUG 1402/1) (Anacystis nidulans), this protein is tRNA(Ile)-lysidine synthase.